We begin with the raw amino-acid sequence, 89 residues long: Large ribosomal subunit protein bL27 (89 aa).

The interval 1–24 is disordered; the sequence is MAHKKGTGSTRNGRDSNAKRLGVK.

It belongs to the bacterial ribosomal protein bL27 family.

In Synechococcus sp. (strain JA-2-3B'a(2-13)) (Cyanobacteria bacterium Yellowstone B-Prime), this protein is Large ribosomal subunit protein bL27.